A 166-amino-acid chain; its full sequence is tRNA-acetylating toxin (166 aa).

The interval 1-22 is disordered; the sequence is MSGYSAPRRISDADDVTSFSSG. In terms of domain architecture, N-acetyltransferase spans 1–162; that stretch reads MSGYSAPRRI…LMLLMKDARA (162 aa). Residue Tyr138 is part of the active site.

It belongs to the acetyltransferase family. GNAT subfamily. Homodimer, forms a complex with cognate antitoxin TacA.

It carries out the reaction glycyl-tRNA(Gly) + acetyl-CoA = N-acetylglycyl-tRNA(Gly) + CoA + H(+). In terms of biological role, toxic component of a type II toxin-antitoxin (TA) system. Overexpression of this gene alone in M.smegmatis inhibits growth, while overexpression of the tacA-tacT operon does not. Acetylates glycyl-tRNA(Gly) but not other tRNAs, blocks in vitro translation in the presence, but not absence, of acetyl-coenzyme A. Peptidyl-tRNA hydrolase (pth) counteracts the product of this enzyme in vitro. Neutralized by cognate antitoxin TacA. Does not seem to be active in laboratory growth conditions. Functionally, tacA-TacT both represses and derepresses expression of its own operon. The sequence is that of tRNA-acetylating toxin from Mycobacterium tuberculosis (strain ATCC 25618 / H37Rv).